A 485-amino-acid chain; its full sequence is Glutamyl-tRNA(Gln) amidotransferase subunit A (485 aa).

Catalysis depends on charge relay system residues Lys-76 and Ser-151. The active-site Acyl-ester intermediate is Ser-175.

The protein belongs to the amidase family. GatA subfamily. In terms of assembly, heterotrimer of A, B and C subunits.

It carries out the reaction L-glutamyl-tRNA(Gln) + L-glutamine + ATP + H2O = L-glutaminyl-tRNA(Gln) + L-glutamate + ADP + phosphate + H(+). Allows the formation of correctly charged Gln-tRNA(Gln) through the transamidation of misacylated Glu-tRNA(Gln) in organisms which lack glutaminyl-tRNA synthetase. The reaction takes place in the presence of glutamine and ATP through an activated gamma-phospho-Glu-tRNA(Gln). The sequence is that of Glutamyl-tRNA(Gln) amidotransferase subunit A from Pelagibacter ubique (strain HTCC1062).